Reading from the N-terminus, the 685-residue chain is DNA ligase (685 aa).

Residues 47–51, 96–97, and glutamate 125 contribute to the NAD(+) site; these read DSEYD and SL. Lysine 127 functions as the N6-AMP-lysine intermediate in the catalytic mechanism. Arginine 148, glutamate 185, lysine 304, and lysine 328 together coordinate NAD(+). Residues cysteine 422, cysteine 425, cysteine 440, and cysteine 446 each contribute to the Zn(2+) site. The BRCT domain occupies 605 to 685; the sequence is ADAQPLKGQT…ALLALFAANR (81 aa).

Belongs to the NAD-dependent DNA ligase family. LigA subfamily. Mg(2+) serves as cofactor. It depends on Mn(2+) as a cofactor.

The enzyme catalyses NAD(+) + (deoxyribonucleotide)n-3'-hydroxyl + 5'-phospho-(deoxyribonucleotide)m = (deoxyribonucleotide)n+m + AMP + beta-nicotinamide D-nucleotide.. Functionally, DNA ligase that catalyzes the formation of phosphodiester linkages between 5'-phosphoryl and 3'-hydroxyl groups in double-stranded DNA using NAD as a coenzyme and as the energy source for the reaction. It is essential for DNA replication and repair of damaged DNA. The sequence is that of DNA ligase from Shewanella putrefaciens (strain CN-32 / ATCC BAA-453).